We begin with the raw amino-acid sequence, 100 residues long: Small ribosomal subunit protein uS14c (100 aa).

Belongs to the universal ribosomal protein uS14 family. As to quaternary structure, part of the 30S ribosomal subunit.

It is found in the plastid. Its subcellular location is the chloroplast. In terms of biological role, binds 16S rRNA, required for the assembly of 30S particles. This is Small ribosomal subunit protein uS14c from Gracilaria tenuistipitata var. liui (Red alga).